A 273-amino-acid polypeptide reads, in one-letter code: Nitrogenase iron protein 2 (273 aa).

8–15 is a binding site for ATP; the sequence is GKGGIGKS. Residue Cys95 coordinates [4Fe-4S] cluster. Arg98 carries the post-translational modification ADP-ribosylarginine; by dinitrogenase reductase ADP-ribosyltransferase. Residue Cys130 participates in [4Fe-4S] cluster binding.

Belongs to the NifH/BchL/ChlL family. As to quaternary structure, homodimer. It depends on [4Fe-4S] cluster as a cofactor. Post-translationally, the reversible ADP-ribosylation of Arg-98 inactivates the nitrogenase reductase and regulates nitrogenase activity.

It carries out the reaction N2 + 8 reduced [2Fe-2S]-[ferredoxin] + 16 ATP + 16 H2O = H2 + 8 oxidized [2Fe-2S]-[ferredoxin] + 2 NH4(+) + 16 ADP + 16 phosphate + 6 H(+). In terms of biological role, the key enzymatic reactions in nitrogen fixation are catalyzed by the nitrogenase complex, which has 2 components: the iron protein and the molybdenum-iron protein. The sequence is that of Nitrogenase iron protein 2 (nifH2) from Methanosarcina barkeri.